The sequence spans 397 residues: Glia-derived nexin (397 aa).

Positions 1–19 are cleaved as a signal peptide; that stretch reads MNWHFPFFILTTVTLSSVY. A glycan (N-linked (GlcNAc...) asparagine) is linked at Asn-159.

Belongs to the serpin family.

It localises to the secreted. The protein localises to the extracellular space. Serine protease inhibitor with activity toward thrombin, trypsin, and urokinase. Promotes neurite extension by inhibiting thrombin. Binds heparin. The protein is Glia-derived nexin (Serpine2) of Rattus norvegicus (Rat).